The following is an 80-amino-acid chain: U-Asilidin(1)-Dg12 (80 aa).

The first 24 residues, 1–24 (MARLLVVSVGVFLAVIMLSSETMS), serve as a signal peptide directing secretion. Residues 25-46 (LPAGENLPALTLFEAQNQLIGL) constitute a propeptide that is removed on maturation. Cystine bridges form between Cys53–Cys67, Cys60–Cys71, and Cys66–Cys78.

It belongs to the asilidin-1 family. Expressed by the venom gland.

The protein localises to the secreted. Its function is as follows. Neurotoxin that may modulate ions channels (other than those tested). In vivo, induces neurotoxic effects when injected into insects (tested on L.cuprina and A.domesticus). This chain is U-Asilidin(1)-Dg12, found in Dolopus genitalis (Giant Australian assassin fly).